Consider the following 264-residue polypeptide: tRNA (guanine-N(1)-)-methyltransferase (264 aa).

149-154 (IGDYVL) lines the S-adenosyl-L-methionine pocket.

It belongs to the RNA methyltransferase TrmD family. Homodimer.

Its subcellular location is the cytoplasm. It catalyses the reaction guanosine(37) in tRNA + S-adenosyl-L-methionine = N(1)-methylguanosine(37) in tRNA + S-adenosyl-L-homocysteine + H(+). In terms of biological role, specifically methylates guanosine-37 in various tRNAs. In Methylobacillus flagellatus (strain ATCC 51484 / DSM 6875 / VKM B-1610 / KT), this protein is tRNA (guanine-N(1)-)-methyltransferase.